Consider the following 314-residue polypeptide: uncharacterized protein (314 aa).

A signal peptide spans 1-18 (MLIQILFLIILTLNCSYS). N-linked (GlcNAc...) asparagine glycosylation is found at asparagine 68, asparagine 72, asparagine 106, and asparagine 256.

It is found in the secreted. This is an uncharacterized protein from Caenorhabditis elegans.